The chain runs to 226 residues: LIM domain-containing protein PLIM2a (226 aa).

2 LIM zinc-binding domains span residues 8-68 (DKCK…LFKE) and 104-164 (DKCA…LFLE). Residues 173–226 (QAAANHRRSASSGGASPPSDDHKPDDTASIPEAKEDDAAPEAAGEEEPEPVVES) are disordered. The span at 191–209 (SDDHKPDDTASIPEAKEDD) shows a compositional bias: basic and acidic residues. Over residues 210–226 (AAPEAAGEEEPEPVVES) the composition is skewed to acidic residues.

As to quaternary structure, interacts with F-actin. Predominantly expressed in flowers, in the tapetum and in pollen grains. Detected in leaves and stems.

The protein localises to the cytoplasm. It is found in the cytoskeleton. In terms of biological role, binds to actin filaments and promotes cross-linking into thick bundles. Has an actin-stabilizing activity. The actin regulatory activities are inhibited by pH &gt; 6.8 but are [Ca(2+)] independent. The polypeptide is LIM domain-containing protein PLIM2a (Arabidopsis thaliana (Mouse-ear cress)).